The sequence spans 325 residues: ADP-ribose glycohydrolase MACROD1 (325 aa).

N6-succinyllysine occurs at positions 96, 103, and 129. Lys-138 participates in a covalent cross-link: Glycyl lysine isopeptide (Lys-Gly) (interchain with G-Cter in SUMO2). The Macro domain maps to 141–322 (EPRYKKDKQL…IYRSRLPHYF (182 aa)). Position 159 to 161 (159 to 161 (SDI)) interacts with substrate. The residue at position 163 (Lys-163) is an N6-acetyllysine. Residues 172–174 (AAN), 179–184 (GGGGVD), 267–273 (ISTGVFG), and Phe-306 each bind substrate.

The protein belongs to the MacroD-type family. MacroD1/2-like subfamily. Interacts with ESR1; Interacts in a manner that is estrogen independent but is enhanced by estrogen. Interacts (via macro domain) with AR.

The protein resides in the nucleus. It catalyses the reaction 3''-O-acetyl-ADP-D-ribose + H2O = ADP-D-ribose + acetate + H(+). It carries out the reaction 2''-O-acetyl-ADP-D-ribose + H2O = ADP-D-ribose + acetate + H(+). The enzyme catalyses 4-O-(ADP-D-ribosyl)-L-aspartyl-[protein] + H2O = L-aspartyl-[protein] + ADP-D-ribose + H(+). The catalysed reaction is 5-O-(ADP-D-ribosyl)-L-glutamyl-[protein] + H2O = L-glutamyl-[protein] + ADP-D-ribose + H(+). It catalyses the reaction alpha-NAD(+) + H2O = ADP-D-ribose + nicotinamide + H(+). With respect to regulation, subject to competitive inhibition by the product ADP-ribose. Removes ADP-ribose from aspartate and glutamate residues in proteins bearing a single ADP-ribose moiety. Inactive towards proteins bearing poly-ADP-ribose. Deacetylates O-acetyl-ADP ribose, a signaling molecule generated by the deacetylation of acetylated lysine residues in histones and other proteins. Plays a role in estrogen signaling. Binds to androgen receptor (AR) and amplifies the transactivation function of AR in response to androgen. May play an important role in carcinogenesis and/or progression of hormone-dependent cancers by feed-forward mechanism that activates ESR1 transactivation. Could be an ESR1 coactivator, providing a positive feedback regulatory loop for ESR1 signal transduction. Could be involved in invasive growth by down-regulating CDH1 in endometrial cancer cells. Enhances ESR1-mediated transcription activity. In Homo sapiens (Human), this protein is ADP-ribose glycohydrolase MACROD1.